We begin with the raw amino-acid sequence, 591 residues long: uncharacterized protein (591 aa).

The span at 1–10 (MSIRGVGGNG) shows a compositional bias: gly residues. Disordered regions lie at residues 1–37 (MSIR…KVED), 110–135 (RSSA…GYRE), 324–344 (EESG…AQGP), and 487–517 (GHYQ…TPPL). Residues 11-32 (NSRIPSHNGDGSNRRSQNTKGN) show a composition bias toward polar residues. Residues 110 to 132 (RSSATRAAESGSSSRTARGASSG) show a composition bias toward low complexity. Positions 490 to 507 (QDPRASDYDLPRASDYDL) are enriched in basic and acidic residues.

To C.muridarum TC_0268.

This is an uncharacterized protein from Chlamydia trachomatis serovar D (strain ATCC VR-885 / DSM 19411 / UW-3/Cx).